Reading from the N-terminus, the 140-residue chain is Protein BIC1 (140 aa).

The segment covering 1-10 has biased composition (polar residues); that stretch reads MMNIDDTTSP. Positions 1-71 are disordered; the sequence is MMNIDDTTSP…RVDTGRERLK (71 aa). Residues 42–68 show a composition bias toward basic and acidic residues; the sequence is ADKKDLALLEEKPKQSQEEDRVDTGRE.

In terms of assembly, interacts with CRY2 in both darkness and light.

Its subcellular location is the nucleus. Its function is as follows. Regulates the blue-light dependent dimerization of CRY2 and formation of photobodies. Interacts with photoexited CRY2 to inhibit its activity. Inhibits CRY phosphorylation. In Arabidopsis thaliana (Mouse-ear cress), this protein is Protein BIC1.